The following is a 264-amino-acid chain: NAD-capped RNA hydrolase NudC (264 aa).

A substrate-binding site is contributed by arginine 70. Zn(2+) is bound by residues cysteine 99 and cysteine 102. Residue glutamate 112 coordinates substrate. Zn(2+)-binding residues include cysteine 117 and cysteine 120. Position 125 (tyrosine 125) interacts with substrate. A Nudix hydrolase domain is found at 126-253; that stretch reads PVICPSIIVA…TIARKLIHVT (128 aa). Residues alanine 162, glutamate 178, and glutamate 182 each contribute to the a divalent metal cation site. The Nudix box signature appears at 163–184; the sequence is GFVEVGETFEQAVQREVFEETG. 196–203 contributes to the substrate binding site; the sequence is QPWAFPNS. Residue glutamate 223 coordinates a divalent metal cation. Alanine 246 is a binding site for substrate.

Belongs to the Nudix hydrolase family. NudC subfamily. In terms of assembly, homodimer. The cofactor is Mg(2+). It depends on Mn(2+) as a cofactor. Zn(2+) is required as a cofactor.

The enzyme catalyses a 5'-end NAD(+)-phospho-ribonucleoside in mRNA + H2O = a 5'-end phospho-adenosine-phospho-ribonucleoside in mRNA + beta-nicotinamide D-ribonucleotide + 2 H(+). It catalyses the reaction NAD(+) + H2O = beta-nicotinamide D-ribonucleotide + AMP + 2 H(+). It carries out the reaction NADH + H2O = reduced beta-nicotinamide D-ribonucleotide + AMP + 2 H(+). Functionally, mRNA decapping enzyme that specifically removes the nicotinamide adenine dinucleotide (NAD) cap from a subset of mRNAs by hydrolyzing the diphosphate linkage to produce nicotinamide mononucleotide (NMN) and 5' monophosphate mRNA. The NAD-cap is present at the 5'-end of some mRNAs and stabilizes RNA against 5'-processing. Has preference for mRNAs with a 5'-end purine. Catalyzes the hydrolysis of a broad range of dinucleotide pyrophosphates. The sequence is that of NAD-capped RNA hydrolase NudC from Haemophilus influenzae (strain 86-028NP).